Reading from the N-terminus, the 545-residue chain is Chaperonin GroEL (545 aa).

ATP-binding positions include 29–32, Lys-50, 86–90, Gly-414, 477–479, and Asp-493; these read TMGP, DGTTT, and DAA.

It belongs to the chaperonin (HSP60) family. As to quaternary structure, forms a cylinder of 14 subunits composed of two heptameric rings stacked back-to-back. Interacts with the co-chaperonin GroES.

The protein localises to the cytoplasm. It carries out the reaction ATP + H2O + a folded polypeptide = ADP + phosphate + an unfolded polypeptide.. Its function is as follows. Together with its co-chaperonin GroES, plays an essential role in assisting protein folding. The GroEL-GroES system forms a nano-cage that allows encapsulation of the non-native substrate proteins and provides a physical environment optimized to promote and accelerate protein folding. This is Chaperonin GroEL from Campylobacter jejuni subsp. jejuni serotype O:6 (strain 81116 / NCTC 11828).